The following is a 396-amino-acid chain: L-lactate dehydrogenase (396 aa).

The 380-residue stretch at 1-380 folds into the FMN hydroxy acid dehydrogenase domain; the sequence is MIISAASDYR…TQDSLVQGLG (380 aa). Tyrosine 24 contributes to the substrate binding site. The FMN site is built by serine 106 and glutamine 127. Substrate is bound at residue tyrosine 129. Threonine 155 contacts FMN. Residue arginine 164 participates in substrate binding. Lysine 251 is an FMN binding site. The active-site Proton acceptor is histidine 275. Arginine 278 provides a ligand contact to substrate. 306-330 is an FMN binding site; the sequence is DSGIRNGLDVVRMIALGADTVLLGR.

This sequence belongs to the FMN-dependent alpha-hydroxy acid dehydrogenase family. Requires FMN as cofactor.

The protein resides in the cell inner membrane. It catalyses the reaction (S)-lactate + A = pyruvate + AH2. In terms of biological role, catalyzes the conversion of L-lactate to pyruvate. Is coupled to the respiratory chain. The polypeptide is L-lactate dehydrogenase (Shigella boydii serotype 18 (strain CDC 3083-94 / BS512)).